A 77-amino-acid chain; its full sequence is Putative neurotoxin 3 (77 aa).

The first 25 residues, 1 to 25, serve as a signal peptide directing secretion; it reads MKAFIAILSIAIVLLLIVSIKETSA. Positions 26 to 46 are excised as a propeptide; sequence KDCKQECVKRYTNGDLTNFLK.

Belongs to the scolopendra neurotoxin 3 family. Contains 2 disulfide bonds. In terms of tissue distribution, expressed by the venom gland.

The protein localises to the secreted. The chain is Putative neurotoxin 3 from Scolopendra mutilans (Chinese red-headed centipede).